The chain runs to 100 residues: NADH-quinone oxidoreductase subunit K (100 aa).

The next 3 membrane-spanning stretches (helical) occupy residues 3–23 (PTSY…VGVI), 29–49 (LVLF…LVTF), and 60–80 (IVVF…LALL).

The protein belongs to the complex I subunit 4L family. In terms of assembly, NDH-1 is composed of 14 different subunits. Subunits NuoA, H, J, K, L, M, N constitute the membrane sector of the complex.

The protein resides in the cell membrane. The enzyme catalyses a quinone + NADH + 5 H(+)(in) = a quinol + NAD(+) + 4 H(+)(out). Its function is as follows. NDH-1 shuttles electrons from NADH, via FMN and iron-sulfur (Fe-S) centers, to quinones in the respiratory chain. The immediate electron acceptor for the enzyme in this species is believed to be ubiquinone. Couples the redox reaction to proton translocation (for every two electrons transferred, four hydrogen ions are translocated across the cytoplasmic membrane), and thus conserves the redox energy in a proton gradient. The polypeptide is NADH-quinone oxidoreductase subunit K (Roseiflexus castenholzii (strain DSM 13941 / HLO8)).